The following is a 93-amino-acid chain: Pyrimidine/purine nucleoside phosphorylase (93 aa).

It belongs to the nucleoside phosphorylase PpnP family.

It carries out the reaction a purine D-ribonucleoside + phosphate = a purine nucleobase + alpha-D-ribose 1-phosphate. It catalyses the reaction adenosine + phosphate = alpha-D-ribose 1-phosphate + adenine. The catalysed reaction is cytidine + phosphate = cytosine + alpha-D-ribose 1-phosphate. The enzyme catalyses guanosine + phosphate = alpha-D-ribose 1-phosphate + guanine. It carries out the reaction inosine + phosphate = alpha-D-ribose 1-phosphate + hypoxanthine. It catalyses the reaction thymidine + phosphate = 2-deoxy-alpha-D-ribose 1-phosphate + thymine. The catalysed reaction is uridine + phosphate = alpha-D-ribose 1-phosphate + uracil. The enzyme catalyses xanthosine + phosphate = alpha-D-ribose 1-phosphate + xanthine. Its function is as follows. Catalyzes the phosphorolysis of diverse nucleosides, yielding D-ribose 1-phosphate and the respective free bases. Can use uridine, adenosine, guanosine, cytidine, thymidine, inosine and xanthosine as substrates. Also catalyzes the reverse reactions. This Photobacterium profundum (strain SS9) protein is Pyrimidine/purine nucleoside phosphorylase.